We begin with the raw amino-acid sequence, 195 residues long: Calcineurin B homologous protein 1 (195 aa).

G2 carries the N-myristoyl glycine lipid modification. Positions G2–S6 match the Necessary for association with microtubule and interaction with GAPDH motif. EF-hand domains follow at residues S26 to P61, I66 to D101, S110 to V145, and Q151 to E186. Ca(2+)-binding residues include D123, D125, D127, K129, and E134. The short motif at V138–I147 is the Nuclear export signal 1 element. The necessary for nuclear export signal stretch occupies residues V143–V185. D164, D166, D168, and E175 together coordinate Ca(2+). The Nuclear export signal 2 signature appears at F176 to V185.

The protein belongs to the calcineurin regulatory subunit family. CHP subfamily. As to quaternary structure, monomer. Interacts with STK17B; the interaction occurs in a calcium-independent manner and induces the translocation of CHP1 from the Golgi to the nucleus. Interacts with GAPDH; the interaction is direct, occurs in a N-myristoylation-dependent manner and facilitates the ability of CHP1 to bind microtubules. Interacts with KIF1B (via the C-terminal end of the kinesin-motor domain); the interaction occurs in a calcium-dependent manner. Associates (via C-terminal domain) with microtubules; the association occurs with polymerized microtubules during the cell cycle in a myristoylation- and calcium-independent manner and is enhanced by GAPDH. Interacts with PPP3CA. Interacts with SLC9A1/NHE1 (via the C-terminal domain); the interaction occurs at the plasma membrane in a calcium-dependent manner and at a domain that is critical for growth factor stimulation of the exchanger. Interacts with SLC9A3; increases SLC9A3 trafficking and activity at the plasma membrane. In terms of processing, phosphorylated; decreased phosphorylation is associated with an increase in SLC9A1/NHE1 Na(+)/H(+) exchange activity. Phosphorylation occurs in serum-dependent manner. The phosphorylation state may regulate the binding to SLC9A1/NHE1. Post-translationally, both N-myristoylation and calcium-mediated conformational changes are essential for its function in exocytic traffic. N-myristoylation is required for its association with microtubules and interaction with GAPDH, but not for the constitutive association to membranes. As to expression, ubiquitously expressed. Has been found in fetal eye, lung, liver, muscle, heart, kidney, thymus and spleen.

Its subcellular location is the nucleus. It is found in the cytoplasm. It localises to the cytoskeleton. The protein localises to the endomembrane system. The protein resides in the endoplasmic reticulum-Golgi intermediate compartment. Its subcellular location is the endoplasmic reticulum. It is found in the cell membrane. It localises to the membrane. Its function is as follows. Calcium-binding protein involved in different processes such as regulation of vesicular trafficking, plasma membrane Na(+)/H(+) exchanger and gene transcription. Involved in the constitutive exocytic membrane traffic. Mediates the association between microtubules and membrane-bound organelles of the endoplasmic reticulum and Golgi apparatus and is also required for the targeting and fusion of transcytotic vesicles (TCV) with the plasma membrane. Functions as an integral cofactor in cell pH regulation by controlling plasma membrane-type Na(+)/H(+) exchange activity. Affects the pH sensitivity of SLC9A1/NHE1 by increasing its sensitivity at acidic pH. Required for the stabilization and localization of SLC9A1/NHE1 at the plasma membrane. Inhibits serum- and GTPase-stimulated Na(+)/H(+) exchange. Plays a role as an inhibitor of ribosomal RNA transcription by repressing the nucleolar UBF1 transcriptional activity. May sequester UBF1 in the nucleoplasm and limit its translocation to the nucleolus. Associates to the ribosomal gene promoter. Acts as a negative regulator of the calcineurin/NFAT signaling pathway. Inhibits NFAT nuclear translocation and transcriptional activity by suppressing the calcium-dependent calcineurin phosphatase activity. Also negatively regulates the kinase activity of the apoptosis-induced kinase STK17B. Inhibits both STK17B auto- and substrate-phosphorylations in a calcium-dependent manner. The sequence is that of Calcineurin B homologous protein 1 (CHP1) from Homo sapiens (Human).